Consider the following 453-residue polypeptide: Membrane-bound acylglycerophosphatidylinositol O-acyltransferase mboa-7 (453 aa).

7 consecutive transmembrane segments (helical) span residues 4–24 (ILGL…FSFG), 36–56 (ILAS…PKIV), 79–99 (LYVF…HYIL), 154–174 (AYFY…QMLI), 195–215 (VRLL…PLDI), 220–240 (AIWE…FVVF), and 244–264 (VYSA…GIYP). Residue Asn-319 is glycosylated (N-linked (GlcNAc...) asparagine). His-350 is an active-site residue. Helical transmembrane passes span 354-374 (AGYF…DVIF) and 421-441 (FWSS…IYSA).

This sequence belongs to the membrane-bound acyltransferase family. In terms of tissue distribution, expressed ubiquitously throughout development from early embryo to larval and adult stages. In adults, strongly expressed in pharyngeal muscle, body wall muscle, vulval cells, distal tip cells, intestinal cells and spermatheca.

The protein resides in the membrane. It catalyses the reaction 1-octadecanoyl-sn-glycero-3-phospho-(1D-myo-inositol) + (5Z,8Z,11Z,14Z,17Z)-eicosapentaenoyl-CoA = 1-octadecanoyl-2-(5Z,8Z,11Z,14Z,17Z-eicosapentaenoyl)-sn-glycero-3-phospho-(1D-myo-inositol) + CoA. It carries out the reaction a 1-acyl-sn-glycero-3-phospho-(1D-myo-inositol) + (5Z,8Z,11Z,14Z,17Z)-eicosapentaenoyl-CoA = a 1-acyl-2-(5Z,8Z,11Z,14Z,17Z-eicosapentaenoyl)-sn-glycero-3-phospho-(1D-myo-inositol) + CoA. The enzyme catalyses a 1-acyl-sn-glycero-3-phospho-(1D-myo-inositol) + (5Z,8Z,11Z,14Z)-eicosatetraenoyl-CoA = a 1-acyl-2-(5Z,8Z,11Z,14Z-eicosatetraenoyl)-sn-glycero-3-phospho-(1D-myo-inositol) + CoA. Its pathway is lipid metabolism; phospholipid metabolism. Its function is as follows. Acyltransferase which mediates the conversion of lysophosphatidylinositol (1-acyl-sn-glycero-3-phosphatidylinositol or LPI) into phosphatidylinositol (1,2-diacyl-sn-glycero-3-phosphoinositol or PI) (LPIAT activity). Prefers sn-2-LPI rather than sn-1-LPI as the acyl acceptor. Lysophospholipid acyltransferases (LPLATs) catalyze the reacylation step of the phospholipid remodeling pathway also known as the Lands cycle. Involved in the selective incorporation of arachidonoyl-CoA ((5Z,8Z,11Z,14Z)-eicosatetraenoyl-CoA) and (5Z,8Z,11Z,14Z,17Z)-eicosapentaenoyl-CoA (EPA-CoA) into PI. Besides its role in biomembranes, PI is a precursor of PI 3-phosphate (PIP3) and its fatty acid composition has an important role in PI3P signaling. This chain is Membrane-bound acylglycerophosphatidylinositol O-acyltransferase mboa-7, found in Caenorhabditis elegans.